The primary structure comprises 480 residues: Glutamate--tRNA ligase (480 aa).

The 'HIGH' region signature appears at 9–19 (PSPTGNLHIGT). Residues 250 to 254 (KLSKR) carry the 'KMSKS' region motif. K253 is a binding site for ATP.

The protein belongs to the class-I aminoacyl-tRNA synthetase family. Glutamate--tRNA ligase type 1 subfamily. As to quaternary structure, monomer.

The protein resides in the cytoplasm. It catalyses the reaction tRNA(Glu) + L-glutamate + ATP = L-glutamyl-tRNA(Glu) + AMP + diphosphate. Catalyzes the attachment of glutamate to tRNA(Glu) in a two-step reaction: glutamate is first activated by ATP to form Glu-AMP and then transferred to the acceptor end of tRNA(Glu). This is Glutamate--tRNA ligase from Microcystis aeruginosa (strain NIES-843 / IAM M-2473).